We begin with the raw amino-acid sequence, 322 residues long: Uracil-DNA glycosylase (322 aa).

D142 acts as the Proton acceptor in catalysis.

This sequence belongs to the uracil-DNA glycosylase (UDG) superfamily. UNG family.

The protein localises to the mitochondrion. It is found in the nucleus. The catalysed reaction is Hydrolyzes single-stranded DNA or mismatched double-stranded DNA and polynucleotides, releasing free uracil.. Excises uracil residues from the DNA which can arise as a result of misincorporation of dUMP residues by DNA polymerase or due to deamination of cytosine. This chain is Uracil-DNA glycosylase (ung1), found in Schizosaccharomyces pombe (strain 972 / ATCC 24843) (Fission yeast).